Consider the following 144-residue polypeptide: Large ribosomal subunit protein uL11 (144 aa).

Belongs to the universal ribosomal protein uL11 family. In terms of assembly, part of the ribosomal stalk of the 50S ribosomal subunit. Interacts with L10 and the large rRNA to form the base of the stalk. L10 forms an elongated spine to which L12 dimers bind in a sequential fashion forming a multimeric L10(L12)X complex. One or more lysine residues are methylated.

Its function is as follows. Forms part of the ribosomal stalk which helps the ribosome interact with GTP-bound translation factors. This is Large ribosomal subunit protein uL11 from Francisella tularensis subsp. holarctica (strain OSU18).